A 388-amino-acid chain; its full sequence is Protochlorophyllide reductase A, chloroplastic (388 aa).

The transit peptide at 1 to 74 (MALQLLPSTL…SPSGKKTLRQ (74 aa)) directs the protein to the chloroplast. A compositionally biased stretch (low complexity) spans 48–68 (VATAPSPVTTSPGSTASSPSG). The interval 48–69 (VATAPSPVTTSPGSTASSPSGK) is disordered.

Belongs to the short-chain dehydrogenases/reductases (SDR) family. POR subfamily.

The protein resides in the plastid. It localises to the chloroplast. It carries out the reaction chlorophyllide a + NADP(+) = protochlorophyllide a + NADPH + H(+). It participates in porphyrin-containing compound metabolism; chlorophyll biosynthesis. In terms of biological role, phototransformation of protochlorophyllide (Pchlide) to chlorophyllide (Chlide). The chain is Protochlorophyllide reductase A, chloroplastic (PORA) from Hordeum vulgare (Barley).